Reading from the N-terminus, the 433-residue chain is Tol-Pal system protein TolB (433 aa).

Residues Met-1–Ala-21 form the signal peptide.

It belongs to the TolB family. As to quaternary structure, the Tol-Pal system is composed of five core proteins: the inner membrane proteins TolA, TolQ and TolR, the periplasmic protein TolB and the outer membrane protein Pal. They form a network linking the inner and outer membranes and the peptidoglycan layer.

It localises to the periplasm. In terms of biological role, part of the Tol-Pal system, which plays a role in outer membrane invagination during cell division and is important for maintaining outer membrane integrity. The chain is Tol-Pal system protein TolB from Pseudomonas entomophila (strain L48).